The following is a 101-amino-acid chain: Urease subunit beta (101 aa).

This sequence belongs to the urease beta subunit family. As to quaternary structure, heterotrimer of UreA (gamma), UreB (beta) and UreC (alpha) subunits. Three heterotrimers associate to form the active enzyme.

It is found in the cytoplasm. The catalysed reaction is urea + 2 H2O + H(+) = hydrogencarbonate + 2 NH4(+). It functions in the pathway nitrogen metabolism; urea degradation; CO(2) and NH(3) from urea (urease route): step 1/1. The chain is Urease subunit beta from Variovorax paradoxus (strain S110).